Here is a 204-residue protein sequence, read N- to C-terminus: Large ribosomal subunit protein uL13 (204 aa).

The protein belongs to the universal ribosomal protein uL13 family.

The sequence is that of Large ribosomal subunit protein uL13 (RpL13A) from Spodoptera frugiperda (Fall armyworm).